The chain runs to 1084 residues: Ribonucleoside-diphosphate reductase NrdEB subunit alpha (1084 aa).

Substrate contacts are provided by residues Thr-152, Ser-168–Cys-169, and Gly-197. A disulfide bridge connects residues Cys-169 and Cys-793. The active-site Proton acceptor is Asn-379. The active-site Cysteine radical intermediate is Cys-381. Residues Ile-503–Val-654 enclose the DOD-type homing endonuclease domain. Glu-768 (proton acceptor) is an active-site residue. Pro-964 to Ile-968 provides a ligand contact to substrate.

Belongs to the ribonucleoside diphosphate reductase large chain family. In terms of assembly, tetramer of two alpha and two beta subunits. This protein undergoes protein self-splicing that involves post-translational excision of the intervening region (intein) followed by peptide ligation.

The catalysed reaction is a 2'-deoxyribonucleoside 5'-diphosphate + [thioredoxin]-disulfide + H2O = a ribonucleoside 5'-diphosphate + [thioredoxin]-dithiol. With respect to regulation, under complex allosteric control mediated by deoxynucleoside triphosphates and ATP binding. The type of nucleotide bound at the specificity site determines substrate preference. It seems probable that ATP makes the enzyme reduce CDP and UDP, dGTP favors ADP reduction and dTTP favors GDP reduction. Functionally, provides the precursors necessary for DNA synthesis. Catalyzes the biosynthesis of deoxyribonucleotides from the corresponding ribonucleotides. The sequence is that of Ribonucleoside-diphosphate reductase NrdEB subunit alpha (nrdEB) from Bacillus subtilis (strain 168).